We begin with the raw amino-acid sequence, 455 residues long: Ribulose bisphosphate carboxylase large chain (455 aa).

Lysine 5 is subject to N6,N6,N6-trimethyllysine. Asparagine 114 and threonine 164 together coordinate substrate. Residue lysine 166 is the Proton acceptor of the active site. A substrate-binding site is contributed by lysine 168. Residues lysine 192, aspartate 194, and glutamate 195 each contribute to the Mg(2+) site. Lysine 192 bears the N6-carboxylysine mark. The Proton acceptor role is filled by histidine 285. 3 residues coordinate substrate: arginine 286, histidine 318, and serine 370.

It belongs to the RuBisCO large chain family. Type I subfamily. As to quaternary structure, heterohexadecamer of 8 large chains and 8 small chains; disulfide-linked. The disulfide link is formed within the large subunit homodimers. It depends on Mg(2+) as a cofactor. In terms of processing, the disulfide bond which can form in the large chain dimeric partners within the hexadecamer appears to be associated with oxidative stress and protein turnover.

Its subcellular location is the plastid. The protein resides in the chloroplast. It carries out the reaction 2 (2R)-3-phosphoglycerate + 2 H(+) = D-ribulose 1,5-bisphosphate + CO2 + H2O. It catalyses the reaction D-ribulose 1,5-bisphosphate + O2 = 2-phosphoglycolate + (2R)-3-phosphoglycerate + 2 H(+). Functionally, ruBisCO catalyzes two reactions: the carboxylation of D-ribulose 1,5-bisphosphate, the primary event in carbon dioxide fixation, as well as the oxidative fragmentation of the pentose substrate in the photorespiration process. Both reactions occur simultaneously and in competition at the same active site. In Erythrina crista-galli (Cockspur coral tree), this protein is Ribulose bisphosphate carboxylase large chain.